Consider the following 364-residue polypeptide: Dual-specificity RNA methyltransferase RlmN (364 aa).

The active-site Proton acceptor is Glu91. Residues 102–337 (GTLRITQCLS…AIIRKSKGQD (236 aa)) enclose the Radical SAM core domain. Cys109 and Cys342 are oxidised to a cystine. [4Fe-4S] cluster-binding residues include Cys116, Cys120, and Cys123. S-adenosyl-L-methionine-binding positions include 169-170 (GE), Ser201, 223-225 (SLH), and Asn299. Residue Cys342 is the S-methylcysteine intermediate of the active site.

Belongs to the radical SAM superfamily. RlmN family. It depends on [4Fe-4S] cluster as a cofactor.

It localises to the cytoplasm. The catalysed reaction is adenosine(2503) in 23S rRNA + 2 reduced [2Fe-2S]-[ferredoxin] + 2 S-adenosyl-L-methionine = 2-methyladenosine(2503) in 23S rRNA + 5'-deoxyadenosine + L-methionine + 2 oxidized [2Fe-2S]-[ferredoxin] + S-adenosyl-L-homocysteine. It carries out the reaction adenosine(37) in tRNA + 2 reduced [2Fe-2S]-[ferredoxin] + 2 S-adenosyl-L-methionine = 2-methyladenosine(37) in tRNA + 5'-deoxyadenosine + L-methionine + 2 oxidized [2Fe-2S]-[ferredoxin] + S-adenosyl-L-homocysteine. In terms of biological role, specifically methylates position 2 of adenine 2503 in 23S rRNA and position 2 of adenine 37 in tRNAs. m2A2503 modification seems to play a crucial role in the proofreading step occurring at the peptidyl transferase center and thus would serve to optimize ribosomal fidelity. This Nitratidesulfovibrio vulgaris (strain ATCC 29579 / DSM 644 / CCUG 34227 / NCIMB 8303 / VKM B-1760 / Hildenborough) (Desulfovibrio vulgaris) protein is Dual-specificity RNA methyltransferase RlmN.